A 543-amino-acid polypeptide reads, in one-letter code: MAKFVFVTGGVVSSIGKGIVAASLGRLLKSRGYSVSILKLDPYLNVDPGTMSPYQHGEVFVTEDGAETDLDLGHYERFTDTAMSRLNSVTTGSIYQSVINKERRGDYNGGTVQVIPHITGEIRERIHRVASNSNADVVITEIGGTVGDIESLPFLEAIREFRGDVGRHDLAYIHVTLLPYIGTSGELKTKPTQHSVKELRSIGIQPDVLVCRSDREINAELKRKIGGFCGVHERAVIPSLDADSIYAVPQTLEEQGLCREVLDVLNLTDHDSDMRAWQQLVHKMRNPGPAVKVALVGKYVQLNDAYLSVVEALRHACLAQDASLDLHWVCAEEIENRGADALLHGMDAVVVPGGFGNRGVDGKVAAIRWAREQRIPFLGLCLGMQCAVIEWARNLAGLTDATSAELEPGTSHPVIHLLPEQQDVVDLGGTMRLGVYPCRIAEGSMADRLYGDEVVYERHRHRYEFNNAYRNLFLESGYRISGSSPDGRLVELIELPEHPFFTACQYHPEFLSRPGQPHPLFRGLIEAAQQRLPNSPSEIKATA.

The segment at 1 to 267 (MAKFVFVTGG…CREVLDVLNL (267 aa)) is amidoligase domain. Ser-13 serves as a coordination point for CTP. A UTP-binding site is contributed by Ser-13. An ATP-binding site is contributed by 14–19 (SIGKGI). Tyr-54 contacts L-glutamine. Residue Asp-71 participates in ATP binding. Residues Asp-71 and Glu-141 each coordinate Mg(2+). CTP is bound by residues 148 to 150 (DIE), 188 to 193 (KTKPTQ), and Lys-224. UTP contacts are provided by residues 188 to 193 (KTKPTQ) and Lys-224. The region spanning 292 to 534 (KVALVGKYVQ…IEAAQQRLPN (243 aa)) is the Glutamine amidotransferase type-1 domain. Gly-354 is a binding site for L-glutamine. The active-site Nucleophile; for glutamine hydrolysis is the Cys-381. Residues 382-385 (LGMQ), Glu-405, and Arg-462 each bind L-glutamine. Residues His-507 and Glu-509 contribute to the active site.

This sequence belongs to the CTP synthase family. In terms of assembly, homotetramer.

It catalyses the reaction UTP + L-glutamine + ATP + H2O = CTP + L-glutamate + ADP + phosphate + 2 H(+). The catalysed reaction is L-glutamine + H2O = L-glutamate + NH4(+). It carries out the reaction UTP + NH4(+) + ATP = CTP + ADP + phosphate + 2 H(+). The protein operates within pyrimidine metabolism; CTP biosynthesis via de novo pathway; CTP from UDP: step 2/2. With respect to regulation, allosterically activated by GTP, when glutamine is the substrate; GTP has no effect on the reaction when ammonia is the substrate. The allosteric effector GTP functions by stabilizing the protein conformation that binds the tetrahedral intermediate(s) formed during glutamine hydrolysis. Inhibited by the product CTP, via allosteric rather than competitive inhibition. Catalyzes the ATP-dependent amination of UTP to CTP with either L-glutamine or ammonia as the source of nitrogen. Regulates intracellular CTP levels through interactions with the four ribonucleotide triphosphates. The polypeptide is CTP synthase (Synechococcus sp. (strain WH7803)).